Reading from the N-terminus, the 522-residue chain is 3-octaprenyl-4-hydroxybenzoate carboxy-lyase (522 aa).

Position 181 (Asn181) interacts with Mn(2+). Residues 184 to 186 (IYR), 198 to 200 (RWL), and 203 to 204 (RG) contribute to the prenylated FMN site. Glu247 provides a ligand contact to Mn(2+). The active-site Proton donor is Asp322.

The protein belongs to the UbiD family. Homohexamer. Prenylated FMN is required as a cofactor. Requires Mn(2+) as cofactor.

Its subcellular location is the cell membrane. The catalysed reaction is a 4-hydroxy-3-(all-trans-polyprenyl)benzoate + H(+) = a 2-(all-trans-polyprenyl)phenol + CO2. The protein operates within cofactor biosynthesis; ubiquinone biosynthesis. Functionally, catalyzes the decarboxylation of 3-octaprenyl-4-hydroxy benzoate to 2-octaprenylphenol, an intermediate step in ubiquinone biosynthesis. The sequence is that of 3-octaprenyl-4-hydroxybenzoate carboxy-lyase from Paraburkholderia xenovorans (strain LB400).